A 394-amino-acid polypeptide reads, in one-letter code: Elongation factor Tu 2 (394 aa).

Residues 10–204 enclose the tr-type G domain; that stretch reads KPHVNVGTIG…YLDTYIPEPE (195 aa). The segment at 19–26 is G1; it reads GHVDHGKT. A GTP-binding site is contributed by 19–26; that stretch reads GHVDHGKT. Threonine 26 serves as a coordination point for Mg(2+). The G2 stretch occupies residues 60–64; sequence GITIN. Residues 81–84 are G3; it reads DCPG. GTP is bound by residues 81 to 85 and 136 to 139; these read DCPGH and NKCD. The interval 136–139 is G4; that stretch reads NKCD. A G5 region spans residues 174 to 176; that stretch reads SAL.

Belongs to the TRAFAC class translation factor GTPase superfamily. Classic translation factor GTPase family. EF-Tu/EF-1A subfamily. In terms of assembly, monomer.

It localises to the cytoplasm. It carries out the reaction GTP + H2O = GDP + phosphate + H(+). Its function is as follows. GTP hydrolase that promotes the GTP-dependent binding of aminoacyl-tRNA to the A-site of ribosomes during protein biosynthesis. The sequence is that of Elongation factor Tu 2 from Yersinia enterocolitica serotype O:8 / biotype 1B (strain NCTC 13174 / 8081).